The chain runs to 352 residues: tRNA N6-adenosine threonylcarbamoyltransferase (352 aa).

3 residues coordinate a divalent metal cation: histidine 114, histidine 118, and tyrosine 135. Substrate is bound by residues 135–139 (YVSGG), aspartate 167, glycine 182, glutamate 186, and asparagine 283. Aspartate 311 serves as a coordination point for a divalent metal cation.

Belongs to the KAE1 / TsaD family. Component of the EKC/KEOPS complex composed of at least BUD32, CGI121, GON7, KAE1 and PCC1; the whole complex dimerizes. It depends on a divalent metal cation as a cofactor.

The protein resides in the cytoplasm. It is found in the nucleus. The enzyme catalyses L-threonylcarbamoyladenylate + adenosine(37) in tRNA = N(6)-L-threonylcarbamoyladenosine(37) in tRNA + AMP + H(+). Component of the EKC/KEOPS complex that is required for the formation of a threonylcarbamoyl group on adenosine at position 37 (t(6)A37) in tRNAs that read codons beginning with adenine. The complex is probably involved in the transfer of the threonylcarbamoyl moiety of threonylcarbamoyl-AMP (TC-AMP) to the N6 group of A37. KAE1 likely plays a direct catalytic role in this reaction, but requires other protein(s) of the complex to fulfill this activity. The EKC/KEOPS complex also promotes both telomere uncapping and telomere elongation. The complex is required for efficient recruitment of transcriptional coactivators. In Phaeosphaeria nodorum (strain SN15 / ATCC MYA-4574 / FGSC 10173) (Glume blotch fungus), this protein is tRNA N6-adenosine threonylcarbamoyltransferase.